We begin with the raw amino-acid sequence, 494 residues long: UDP-N-acetylmuramate--L-alanine ligase (494 aa).

Position 140–146 (140–146) interacts with ATP; that stretch reads GTHGKTT.

It belongs to the MurCDEF family.

Its subcellular location is the cytoplasm. It catalyses the reaction UDP-N-acetyl-alpha-D-muramate + L-alanine + ATP = UDP-N-acetyl-alpha-D-muramoyl-L-alanine + ADP + phosphate + H(+). It functions in the pathway cell wall biogenesis; peptidoglycan biosynthesis. Its function is as follows. Cell wall formation. This chain is UDP-N-acetylmuramate--L-alanine ligase, found in Nostoc sp. (strain PCC 7120 / SAG 25.82 / UTEX 2576).